Consider the following 296-residue polypeptide: Aspartate and glycine-rich protein (296 aa).

Gly residues predominate over residues 1 to 77 (GDGENGNGNG…GNGNGNGNGN (77 aa)). Disordered stretches follow at residues 1-219 (GDGE…DNGG) and 233-296 (RARA…YTSY). 2 stretches are compositionally biased toward acidic residues: residues 80-96 (FDDDDWDDFDWDDDDWN) and 103-194 (NGDD…DDRW). Residues 198–210 (NGNGNGNGNGNGN) show a composition bias toward gly residues. Residues 233 to 243 (RARAAASAAGR) show a composition bias toward low complexity. Positions 244-259 (SRGGSGGSGGSGGSGG) are enriched in gly residues. Over residues 270–281 (RAFASARASSGN) the composition is skewed to low complexity.

As to expression, component of the acid-soluble and acid-insoluble organic matrix of calcified shell layers (at protein level).

It localises to the secreted. The polypeptide is Aspartate and glycine-rich protein (Haliotis asinina (Donkey's ear abalone)).